The primary structure comprises 398 residues: Phosphoglycerate kinase (398 aa).

Substrate-binding positions include 22–24, R38, 61–64, R120, and R153; these read DFN and HLGR. Residues K206, G297, E328, and 354 to 357 contribute to the ATP site; that span reads GGDT.

It belongs to the phosphoglycerate kinase family. Monomer.

The protein localises to the cytoplasm. The catalysed reaction is (2R)-3-phosphoglycerate + ATP = (2R)-3-phospho-glyceroyl phosphate + ADP. It participates in carbohydrate degradation; glycolysis; pyruvate from D-glyceraldehyde 3-phosphate: step 2/5. The sequence is that of Phosphoglycerate kinase from Nautilia profundicola (strain ATCC BAA-1463 / DSM 18972 / AmH).